A 334-amino-acid polypeptide reads, in one-letter code: D-alanine--D-alanine ligase (334 aa).

The ATP-grasp domain occupies 121–327; sequence KLWYDALDIP…FSEFLVQCVT (207 aa). Position 151-206 (151-206) interacts with ATP; sequence AFGHWGSIFVKAARQGSSVGCYKVTTEDQIAPAIEAAFGFSEQVLVEQAVKPRELE. Residues D281, E294, and N296 each coordinate Mg(2+).

Belongs to the D-alanine--D-alanine ligase family. Mg(2+) serves as cofactor. Mn(2+) is required as a cofactor.

The protein resides in the cytoplasm. It catalyses the reaction 2 D-alanine + ATP = D-alanyl-D-alanine + ADP + phosphate + H(+). Its pathway is cell wall biogenesis; peptidoglycan biosynthesis. Cell wall formation. This Vibrio cholerae serotype O1 (strain ATCC 39315 / El Tor Inaba N16961) protein is D-alanine--D-alanine ligase.